The following is a 222-amino-acid chain: Orotate phosphoribosyltransferase (222 aa).

5-phospho-alpha-D-ribose 1-diphosphate is bound at residue lysine 29. Orotate is bound at residue 37-38 (FF). Residues 75 to 76 (YK), arginine 101, lysine 102, lysine 105, histidine 107, and 126 to 134 (DDVISAGTS) each bind 5-phospho-alpha-D-ribose 1-diphosphate. Orotate contacts are provided by serine 130 and arginine 158.

Belongs to the purine/pyrimidine phosphoribosyltransferase family. PyrE subfamily. In terms of assembly, homodimer. The cofactor is Mg(2+).

It carries out the reaction orotidine 5'-phosphate + diphosphate = orotate + 5-phospho-alpha-D-ribose 1-diphosphate. Its pathway is pyrimidine metabolism; UMP biosynthesis via de novo pathway; UMP from orotate: step 1/2. Its function is as follows. Catalyzes the transfer of a ribosyl phosphate group from 5-phosphoribose 1-diphosphate to orotate, leading to the formation of orotidine monophosphate (OMP). This chain is Orotate phosphoribosyltransferase, found in Polynucleobacter asymbioticus (strain DSM 18221 / CIP 109841 / QLW-P1DMWA-1) (Polynucleobacter necessarius subsp. asymbioticus).